Here is a 91-residue protein sequence, read N- to C-terminus: Small ribosomal subunit protein uS19 (91 aa).

This sequence belongs to the universal ribosomal protein uS19 family.

Functionally, protein S19 forms a complex with S13 that binds strongly to the 16S ribosomal RNA. In Pseudomonas fluorescens (strain Pf0-1), this protein is Small ribosomal subunit protein uS19.